The following is a 306-amino-acid chain: Ribonuclease Z (306 aa).

Positions 63, 65, 67, 68, 141, 208, and 266 each coordinate Zn(2+). The active-site Proton acceptor is aspartate 67.

This sequence belongs to the RNase Z family. In terms of assembly, homodimer. Requires Zn(2+) as cofactor.

It catalyses the reaction Endonucleolytic cleavage of RNA, removing extra 3' nucleotides from tRNA precursor, generating 3' termini of tRNAs. A 3'-hydroxy group is left at the tRNA terminus and a 5'-phosphoryl group is left at the trailer molecule.. In terms of biological role, zinc phosphodiesterase, which displays some tRNA 3'-processing endonuclease activity. Probably involved in tRNA maturation, by removing a 3'-trailer from precursor tRNA. This Chlamydia caviae (strain ATCC VR-813 / DSM 19441 / 03DC25 / GPIC) (Chlamydophila caviae) protein is Ribonuclease Z.